The chain runs to 155 residues: Endoribonuclease YbeY (155 aa).

H114, H118, and H124 together coordinate Zn(2+).

The protein belongs to the endoribonuclease YbeY family. Zn(2+) serves as cofactor.

The protein resides in the cytoplasm. Single strand-specific metallo-endoribonuclease involved in late-stage 70S ribosome quality control and in maturation of the 3' terminus of the 16S rRNA. The polypeptide is Endoribonuclease YbeY (Shigella dysenteriae serotype 1 (strain Sd197)).